We begin with the raw amino-acid sequence, 733 residues long: MALSEDEAEAEVSVNTKVPSCGRWNSGKLLPSGLEPDQPLHLGVEGGPLWRAEADPGCISGVFLSRVHTASKEPVADRSKPPLRGPLPSASVGTGEVLHSMGSQMEEDRLPASQDLLPALQVFGTITVCSGQEADSEDFQATLDPSQVLGLSQQPHTSGLPLPPQWKSTVSPGAPQLSSRSISASSVGSSLQDHQEKAGPQRASFANVSSPELTVPQAAHSVVGAGPPLQGSAQPLTSGSDATGLGKRHLSFQAEYWACALPNSLPPSPNRHSALWDPNKEYEDLLDYTYPLRPGPQLPKQPESHVLTEPVLQDSGVDLDSLSVSPASTLKSPTNVSHNCSSAEVPTLPFSGARESCLKRWPLGIFQKQGGTSLSSWNQLASTPRAPGTEDASWENREAALRGTAEDCLPIGEDLRMGSPQLKTKEKEPPFPRQKRGRQHVSCPACVTPGWPSEEEVGSDEEYLALPTRLTQVSSLVSYSGARPSFVNLHTGAAEEHSSLQVSDSDKPASPTLDSSHRKHPSGTSFQGPVGQNPCFRHSIQPQDSRGKSSLMSNQTLGVSSKPLKTQPASKAMTDRRLFSELVAGETLPRTTDEQEKASLVQCVQTFCCRLEELICWLYNVTDVADLSAPPRTSLTGLKSSLQLYRQFKKDVDEHQSLTESVLEKGEILLQCLLDNTPVLKDVLERIAKQSGELESRADHLYDSILASLDMLAGCTLIPDNRPTAAEHPHEGL.

The segment covering 71–80 (SKEPVADRSK) has biased composition (basic and acidic residues). 3 disordered regions span residues 71-92 (SKEP…SASV), 150-207 (GLSQ…SFAN), and 222-244 (VVGA…DATG). A compositionally biased stretch (low complexity) spans 178 to 190 (SSRSISASSVGSS). The segment covering 231-241 (GSAQPLTSGSD) has biased composition (polar residues). Position 315 is a phosphoserine (serine 315). A disordered region spans residues 420 to 442 (PQLKTKEKEPPFPRQKRGRQHVS). Phosphoserine occurs at positions 453 and 459. Residues 497–571 (HSSLQVSDSD…KPLKTQPASK (75 aa)) form a disordered region. Residues 540 to 569 (IQPQDSRGKSSLMSNQTLGVSSKPLKTQPA) are compositionally biased toward polar residues.

As to quaternary structure, interacts with CNTLN; the interaction recruits CEP68 to the centrosome. Interacts with the SCF(FBXW11) complex which contains SKP1, CUL1 and FBXW11; the interaction is probably mediated by FBXW11 and the complex also contains CDK5RAP2 and PCNT. Also interacts with F-box protein BTRC. Interacts with serine/threonine-protein kinase PLK1; the interaction leads to phosphorylation of CEP68 and its subsequent degradation. Interacts with NEK2; the interaction leads to phosphorylation of CEP68. In terms of processing, phosphorylation by PLK1 is required for binding to BTRC in prometaphase. Phosphorylated directly or indirectly by NEK2. NEK2-mediated phosphorylation promotes CEP68 dissociation from the centrosome and its degradation at the onset of mitosis. Ubiquitinated and targeted for proteasomal degradation in early mitosis by the SCF(BTRC) and/or SCF(FBXW11) E3 ubiquitin-protein ligase complexes. Degradation is complete by prometaphase and is required for removal of CDK5RAP2 from the peripheral pericentriolar material and subsequent centriole separation.

It is found in the cytoplasm. It localises to the cytoskeleton. The protein resides in the microtubule organizing center. Its subcellular location is the centrosome. Involved in maintenance of centrosome cohesion, probably as part of a linker structure which prevents centrosome splitting. Required for localization of CDK5RAP2 to the centrosome during interphase. Contributes to CROCC/rootletin filament formation. The chain is Centrosomal protein of 68 kDa (Cep68) from Mus musculus (Mouse).